A 391-amino-acid chain; its full sequence is Serine acetyltransferase 3, mitochondrial (391 aa).

Disordered stretches follow at residues 40-82 (KHHT…HDDE) and 353-375 (VGNP…IPGL). Residues 45–56 (SPPPSPPPPPPM) show a composition bias toward pro residues.

Belongs to the transferase hexapeptide repeat family. As to quaternary structure, homomultimer. Interacts with OASC. Component of the cysteine synthase complex (CSC) composed of two OAS-TL dimers and one SAT hexamer. As to expression, ubiquitous with higher levels in leaves and siliques. Localized in vascular tissues, particularly in phloem.

The protein resides in the mitochondrion. The enzyme catalyses L-serine + acetyl-CoA = O-acetyl-L-serine + CoA. It participates in amino-acid biosynthesis; L-cysteine biosynthesis; L-cysteine from L-serine: step 1/2. The polypeptide is Serine acetyltransferase 3, mitochondrial (SAT3) (Arabidopsis thaliana (Mouse-ear cress)).